The following is a 379-amino-acid chain: Chaperone protein DnaJ (379 aa).

Residues D5–G69 form the J domain. A CR-type zinc finger spans residues G136 to T218. 8 residues coordinate Zn(2+): C149, C152, C166, C169, C192, C195, C206, and C209. 4 CXXCXGXG motif repeats span residues C149–G156, C166–G173, C192–G199, and C206–G213.

The protein belongs to the DnaJ family. Homodimer. It depends on Zn(2+) as a cofactor.

Its subcellular location is the cytoplasm. In terms of biological role, participates actively in the response to hyperosmotic and heat shock by preventing the aggregation of stress-denatured proteins and by disaggregating proteins, also in an autonomous, DnaK-independent fashion. Unfolded proteins bind initially to DnaJ; upon interaction with the DnaJ-bound protein, DnaK hydrolyzes its bound ATP, resulting in the formation of a stable complex. GrpE releases ADP from DnaK; ATP binding to DnaK triggers the release of the substrate protein, thus completing the reaction cycle. Several rounds of ATP-dependent interactions between DnaJ, DnaK and GrpE are required for fully efficient folding. Also involved, together with DnaK and GrpE, in the DNA replication of plasmids through activation of initiation proteins. This Staphylococcus aureus (strain bovine RF122 / ET3-1) protein is Chaperone protein DnaJ.